Consider the following 118-residue polypeptide: Protein BEX4 (118 aa).

The segment at 14–50 (VEKDKKNKKGGKASKQSEEESHHLEEVENKKPGGNVR) is disordered. The span at 28–44 (KQSEEESHHLEEVENKK) shows a compositional bias: basic and acidic residues. An interaction with SIRT2 region spans residues 30 to 88 (SEEESHHLEEVENKKPGGNVRRKVRRLVPNFLWAIPNRHVDHSEGGEEVGRFVGQVMEA). The tract at residues 30-118 (SEEESHHLEE…DNHYDFCLIP (89 aa)) is interaction with alpha-tubulin. Cysteine 115 provides a ligand contact to Zn(2+).

It belongs to the BEX family. In terms of assembly, interacts with alpha-tubulin. Interacts with SIRT2. In terms of processing, ubiquitinated and degraded by the proteasome.

The protein resides in the cytoplasm. It is found in the cytoskeleton. The protein localises to the spindle pole. Its subcellular location is the nucleus. Functionally, may play a role in microtubule deacetylation by negatively regulating the SIRT2 deacetylase activity toward alpha-tubulin and thereby participate in the control of cell cycle progression and genomic stability. In absence of reductive stress, acts as a pseudosubstrate for the CRL2(FEM1B) complex: associates with FEM1B via zinc, thereby preventing association between FEM1B and its substrates. The sequence is that of Protein BEX4 from Rattus norvegicus (Rat).